Reading from the N-terminus, the 258-residue chain is Octanoyltransferase (258 aa).

Positions 42-226 (NVGTDTLLLL…AVVAALDGEL (185 aa)) constitute a BPL/LPL catalytic domain. Substrate-binding positions include 80-87 (RGGKITWH), 156-158 (AIG), and 169-171 (GFS). Residue cysteine 187 is the Acyl-thioester intermediate of the active site.

It belongs to the LipB family.

It is found in the cytoplasm. It carries out the reaction octanoyl-[ACP] + L-lysyl-[protein] = N(6)-octanoyl-L-lysyl-[protein] + holo-[ACP] + H(+). It participates in protein modification; protein lipoylation via endogenous pathway; protein N(6)-(lipoyl)lysine from octanoyl-[acyl-carrier-protein]: step 1/2. Its function is as follows. Catalyzes the transfer of endogenously produced octanoic acid from octanoyl-acyl-carrier-protein onto the lipoyl domains of lipoate-dependent enzymes. Lipoyl-ACP can also act as a substrate although octanoyl-ACP is likely to be the physiological substrate. The protein is Octanoyltransferase of Rhodococcus jostii (strain RHA1).